The following is a 185-amino-acid chain: Elongation factor P (185 aa).

It belongs to the elongation factor P family.

Its subcellular location is the cytoplasm. It participates in protein biosynthesis; polypeptide chain elongation. In terms of biological role, involved in peptide bond synthesis. Stimulates efficient translation and peptide-bond synthesis on native or reconstituted 70S ribosomes in vitro. Probably functions indirectly by altering the affinity of the ribosome for aminoacyl-tRNA, thus increasing their reactivity as acceptors for peptidyl transferase. This is Elongation factor P from Nostoc punctiforme (strain ATCC 29133 / PCC 73102).